The chain runs to 1018 residues: Transmembrane protein 132A (1018 aa).

Residues 1 to 32 (MTERKAAAPRGPYGAWFCLLVALALEVVRVSS) form the signal peptide. Residues 33-846 (NHDTLDPIYL…VTDLELGMYA (814 aa)) are Extracellular-facing. N-linked (GlcNAc...) asparagine glycosylation is present at asparagine 276. The binds to HSPA5/GRP78 stretch occupies residues 606-911 (IEVRSPLSDA…QLDRCSSSGP (306 aa)). The interval 666 to 1018 (LPAPKQEVAL…NYMERIRGSS (353 aa)) is confers cellular localization similar to full-length form. Positions 807-818 (ERAEEEAGKEEN) are enriched in basic and acidic residues. The disordered stretch occupies residues 807 to 833 (ERAEEEAGKEENEAKEEEEDEEEMVPA). Over residues 819–830 (EAKEEEEDEEEM) the composition is skewed to acidic residues. A helical membrane pass occupies residues 847 to 867 (LLGIFCLAILIFLVNGVVFVL). The Cytoplasmic segment spans residues 868-1018 (RYQRKEPPDS…NYMERIRGSS (151 aa)). The segment at 900 to 956 (SRQLDRCSSSGPPKGEGGCPCESGAGGDASTVAPSASESPAGSSSTLARKEAGGRRK) is disordered. Composition is skewed to low complexity over residues 906–922 (CSSS…PCES) and 932–944 (APSA…GSSS).

Belongs to the TMEM132 family. As to quaternary structure, interacts with HSPA5/GRP78.

Its subcellular location is the golgi apparatus membrane. The protein resides in the endoplasmic reticulum membrane. In terms of biological role, may play a role in embryonic and postnatal development of the brain. Increased resistance to cell death induced by serum starvation in cultured cells. Regulates cAMP-induced GFAP gene expression via STAT3 phosphorylation. The chain is Transmembrane protein 132A (Tmem132a) from Mus musculus (Mouse).